The chain runs to 274 residues: Ribosomal RNA small subunit methyltransferase A (274 aa).

Residues Asn-27, Leu-29, Gly-54, Glu-75, Asp-100, and Asn-121 each contribute to the S-adenosyl-L-methionine site.

This sequence belongs to the class I-like SAM-binding methyltransferase superfamily. rRNA adenine N(6)-methyltransferase family. RsmA subfamily.

The protein resides in the cytoplasm. The catalysed reaction is adenosine(1518)/adenosine(1519) in 16S rRNA + 4 S-adenosyl-L-methionine = N(6)-dimethyladenosine(1518)/N(6)-dimethyladenosine(1519) in 16S rRNA + 4 S-adenosyl-L-homocysteine + 4 H(+). Functionally, specifically dimethylates two adjacent adenosines (A1518 and A1519) in the loop of a conserved hairpin near the 3'-end of 16S rRNA in the 30S particle. May play a critical role in biogenesis of 30S subunits. This chain is Ribosomal RNA small subunit methyltransferase A, found in Acinetobacter baylyi (strain ATCC 33305 / BD413 / ADP1).